A 248-amino-acid chain; its full sequence is Pulmonary surfactant-associated protein A1 (248 aa).

An N-terminal signal peptide occupies residues 1–20; the sequence is MWLCPLALNLILMAASGAVC. In terms of domain architecture, Collagen-like spans 28-100; that stretch reads GSPGIPGTPG…PGERGPPGLP (73 aa). 4-hydroxyproline occurs at positions 30, 33, 36, 42, 54, 57, 63, 67, and 70. Residues 31 to 101 are disordered; sequence GIPGTPGSHG…GERGPPGLPA (71 aa). The segment covering 42-51 has biased composition (basic and acidic residues); sequence PGRDGRDGLK. A compositionally biased stretch (pro residues) spans 54 to 70; it reads PGPPGPMGPPGEMPCPP. The 117-residue stretch at 132 to 248 folds into the C-type lectin domain; that stretch reads MTVGEKVFSS…LYSRLTICEF (117 aa). 2 cysteine pairs are disulfide-bonded: Cys155–Cys246 and Cys224–Cys238. The N-linked (GlcNAc...) asparagine glycan is linked to Asn207.

This sequence belongs to the SFTPA family. As to quaternary structure, oligomeric complex of 6 set of homotrimers. Interacts with CD93. In terms of assembly, (Microbial infection) Binds M.bovis cell surface protein Apa via its glycosylated sites; probably also recognizes other bacterial moieties. (Microbial infection) Binds to the S.aureus extracellular adherence protein, Eap, thereby enhancing phagocytosis and killing of S.aureus by alveolar macrophages. As to quaternary structure, (Microbial infection) Interacts with M.pneumoniae CARDS toxin; CARDS probably uses this protein as a receptor. Post-translationally, N-acetylated.

It localises to the secreted. Its subcellular location is the extracellular space. The protein localises to the extracellular matrix. It is found in the surface film. Functionally, in presence of calcium ions, it binds to surfactant phospholipids and contributes to lower the surface tension at the air-liquid interface in the alveoli of the mammalian lung and is essential for normal respiration. Enhances the expression of MYO18A/SP-R210 on alveolar macrophages. In terms of biological role, (Microbial infection) Recognition of M.tuberculosis by dendritic cells may occur partially via this molecule. Can recognize, bind, and opsonize pathogens to enhance their elimination by alveolar macrophages. Its function is as follows. (Microbial infection) Binds M.pneumoniae CARDS toxin, serves as one receptor for this pathogen. When SFTPA1 is down-regulated by siRNA, less toxin binds to human cells and less vacuolization (a symptom of M.pneumoniae infection) is seen. The polypeptide is Pulmonary surfactant-associated protein A1 (SFTPA1) (Homo sapiens (Human)).